The sequence spans 349 residues: Putative ABC transporter permease protein MJ0087 (349 aa).

Helical transmembrane passes span 15–35 (IIFG…ALCV), 69–89 (IFAA…MQCI), 100–120 (MGIS…FGFG), 135–155 (MITI…LLLA), 166–186 (ILAG…IQYF), 206–226 (AIWT…IYFM), 254–274 (LIGM…LGII), 295–315 (FLIP…DTFA), and 318–338 (IIAP…APMF).

This sequence belongs to the binding-protein-dependent transport system permease family. FecCD subfamily.

The protein resides in the cell membrane. In terms of biological role, probably part of a binding-protein-dependent transport system. Probably responsible for the translocation of the substrate across the membrane. This Methanocaldococcus jannaschii (strain ATCC 43067 / DSM 2661 / JAL-1 / JCM 10045 / NBRC 100440) (Methanococcus jannaschii) protein is Putative ABC transporter permease protein MJ0087.